The sequence spans 385 residues: Uroporphyrinogen decarboxylase (385 aa).

Substrate contacts are provided by residues 53–57 (RQAGR), aspartate 102, tyrosine 179, serine 234, and histidine 363.

The protein belongs to the uroporphyrinogen decarboxylase family. In terms of assembly, homodimer.

It is found in the cytoplasm. It catalyses the reaction uroporphyrinogen III + 4 H(+) = coproporphyrinogen III + 4 CO2. The protein operates within porphyrin-containing compound metabolism; protoporphyrin-IX biosynthesis; coproporphyrinogen-III from 5-aminolevulinate: step 4/4. Functionally, catalyzes the decarboxylation of four acetate groups of uroporphyrinogen-III to yield coproporphyrinogen-III. The protein is Uroporphyrinogen decarboxylase of Tropheryma whipplei (strain TW08/27) (Whipple's bacillus).